The following is a 568-amino-acid chain: Lipoprotein LpqB (568 aa).

Positions 1–23 (MSKISTKLKALSAVLSVTTLVAG) are cleaved as a signal peptide. Residue Cys-24 is the site of N-palmitoyl cysteine attachment. Cys-24 carries S-diacylglycerol cysteine lipidation.

It belongs to the LpqB lipoprotein family.

Its subcellular location is the cell membrane. The sequence is that of Lipoprotein LpqB from Corynebacterium glutamicum (strain R).